A 117-amino-acid polypeptide reads, in one-letter code: Large ribosomal subunit protein uL18 (117 aa).

Belongs to the universal ribosomal protein uL18 family. Part of the 50S ribosomal subunit; part of the 5S rRNA/L5/L18/L25 subcomplex. Contacts the 5S and 23S rRNAs.

Functionally, this is one of the proteins that bind and probably mediate the attachment of the 5S RNA into the large ribosomal subunit, where it forms part of the central protuberance. This is Large ribosomal subunit protein uL18 from Francisella tularensis subsp. novicida (strain U112).